A 74-amino-acid polypeptide reads, in one-letter code: Defensin (74 aa).

Residues methionine 1–alanine 22 form the signal peptide. Residues alanine 23–arginine 36 constitute a propeptide that is removed on maturation. 3 cysteine pairs are disulfide-bonded: cysteine 40–cysteine 61, cysteine 47–cysteine 69, and cysteine 51–cysteine 71.

As to expression, hemolymph.

The protein localises to the secreted. Its function is as follows. Antibacterial activity against Gram-positive and Gram-negative bacteria. This is Defensin (VSNA1) from Dermacentor variabilis (American dog tick).